A 421-amino-acid polypeptide reads, in one-letter code: Tyrosine--tRNA ligase (421 aa).

Position 35 (Tyr-35) interacts with L-tyrosine. The short motif at 40–49 (PTGPSLHAGH) is the 'HIGH' region element. L-tyrosine contacts are provided by Tyr-169 and Gln-173. A 'KMSKS' region motif is present at residues 229-233 (KFGKS). ATP is bound at residue Lys-232. The S4 RNA-binding domain maps to 354–420 (RTIVDLLIAS…GKKNFAGVKI (67 aa)).

It belongs to the class-I aminoacyl-tRNA synthetase family. TyrS type 1 subfamily. In terms of assembly, homodimer.

It is found in the cytoplasm. It catalyses the reaction tRNA(Tyr) + L-tyrosine + ATP = L-tyrosyl-tRNA(Tyr) + AMP + diphosphate + H(+). Catalyzes the attachment of tyrosine to tRNA(Tyr) in a two-step reaction: tyrosine is first activated by ATP to form Tyr-AMP and then transferred to the acceptor end of tRNA(Tyr). In Corynebacterium efficiens (strain DSM 44549 / YS-314 / AJ 12310 / JCM 11189 / NBRC 100395), this protein is Tyrosine--tRNA ligase.